The sequence spans 150 residues: Catabolic 3-dehydroquinase 2 (150 aa).

Tyrosine 23 (proton acceptor) is an active-site residue. 3 residues coordinate substrate: asparagine 74, histidine 80, and aspartate 87. The active-site Proton donor is histidine 100. Substrate contacts are provided by residues 101 to 102 (IT) and arginine 111.

Belongs to the type-II 3-dehydroquinase family. In terms of assembly, homododecamer. Adopts a ring-like structure, composed of an arrangement of two hexameric rings stacked on top of one another.

The catalysed reaction is 3-dehydroquinate = 3-dehydroshikimate + H2O. Its pathway is aromatic compound metabolism; 3,4-dihydroxybenzoate biosynthesis; 3,4-dihydroxybenzoate from 3-dehydroquinate: step 1/2. Functionally, is involved in the catabolism of quinate. Allows the utilization of quinate as carbon source via the beta-ketoadipate pathway. This Aspergillus fumigatus (strain ATCC MYA-4609 / CBS 101355 / FGSC A1100 / Af293) (Neosartorya fumigata) protein is Catabolic 3-dehydroquinase 2.